The chain runs to 92 residues: C-C motif chemokine 4 (92 aa).

The first 23 residues, 1-23 (MKLCVTVLSLLVLAAAFCSPALS), serve as a signal peptide directing secretion. 2 disulfides stabilise this stretch: Cys34/Cys58 and Cys35/Cys74.

This sequence belongs to the intercrine beta (chemokine CC) family. As to quaternary structure, homodimer. Interacts with CCR5. As to expression, detected in peripheral blood mononuclear cells and lymph nodes.

The protein localises to the secreted. Monokine with inflammatory and chemokinetic properties. This Macaca mulatta (Rhesus macaque) protein is C-C motif chemokine 4 (CCL4).